The primary structure comprises 185 residues: Bcl-2-modifying factor (185 aa).

Positions 1–28 (MEPPQCVEELEDDVFQSEDGEPGTQPGG) are disordered. Residues 8 to 21 (EELEDDVFQSEDGE) are compositionally biased toward acidic residues. The segment at 67–75 (DKATQTLSP) is interaction with DLC2. A BH3 motif is present at residues 134–148 (IARKLQCIADQFHRL).

This sequence belongs to the Bcl-2 family. As to quaternary structure, interacts with MCL1, BCL2, BCL2L1/BCL-Xl, BCL2A1 and BCL2L2/BCL-w. Interacts with the myosin V actin motor complex through its binding to DLC2. In terms of tissue distribution, widely expressed with an abundant expression in pancreas, liver kidney and hematopoietic tissues.

In terms of biological role, may play a role in apoptosis. This is Bcl-2-modifying factor (Bmf) from Mus musculus (Mouse).